Here is a 542-residue protein sequence, read N- to C-terminus: MARYVFITGGVVSSLGKGIAAAALAALLQARGYRVRIRKLDPYLNVDPGTMSPYQHGEVFVTDDGAETDLDLGHYERFTGRPANQQDNITTGRIYRNIIEKERRGDYLGATVQVIPHVTDEIKNFVLEGNEDYDFVLCEIGGTVGDIEAMPFLEAIRQLGNELPRGTAVYIHLTLMPYIPAAGELKTKPTQHSVKELRSIGIAPDILLVRADREIPESERRKLSLFCNVRESAVIQALDVATIYDVPIAYHKEGLDSEVLSAFGIDPAPKPRMDRWEEVSHRLHNPEGEVTIAVVGKYTGLKDAYKSLIEALHHGGLANKVKVNLDWIEAEVFESEDPAPYLEKVHGILVPGGFGERGAEGKILAAKFARERKVPYFGICFGMQMACIEAARNLVGIEDASSSEFGPTREPVVGLMTEWLKGNMLEKRAAAGDLGGTMRLGAYEAVLKPDSKIAQIYGSTDIHERHRHRYEVNIDYKDRLEAAGLNFAGMSPDGVLPETVEYADHPWFIGVQYHPELKSRPFEPHPLFASFIEAAIEQSRLV.

The segment at 1–265 is amidoligase domain; the sequence is MARYVFITGG…DSEVLSAFGI (265 aa). Serine 13 provides a ligand contact to CTP. Serine 13 contacts UTP. 14–19 provides a ligand contact to ATP; that stretch reads SLGKGI. Residue tyrosine 54 participates in L-glutamine binding. ATP is bound at residue aspartate 71. Residues aspartate 71 and glutamate 139 each coordinate Mg(2+). CTP is bound by residues 146 to 148, 186 to 191, and lysine 222; these read DIE and KTKPTQ. UTP contacts are provided by residues 186–191 and lysine 222; that span reads KTKPTQ. Positions 291-541 constitute a Glutamine amidotransferase type-1 domain; it reads TIAVVGKYTG…IEAAIEQSRL (251 aa). Glycine 353 provides a ligand contact to L-glutamine. The Nucleophile; for glutamine hydrolysis role is filled by cysteine 380. L-glutamine contacts are provided by residues 381-384, glutamate 404, and arginine 469; that span reads FGMQ. Residues histidine 514 and glutamate 516 contribute to the active site.

The protein belongs to the CTP synthase family. Homotetramer.

It carries out the reaction UTP + L-glutamine + ATP + H2O = CTP + L-glutamate + ADP + phosphate + 2 H(+). The enzyme catalyses L-glutamine + H2O = L-glutamate + NH4(+). The catalysed reaction is UTP + NH4(+) + ATP = CTP + ADP + phosphate + 2 H(+). Its pathway is pyrimidine metabolism; CTP biosynthesis via de novo pathway; CTP from UDP: step 2/2. With respect to regulation, allosterically activated by GTP, when glutamine is the substrate; GTP has no effect on the reaction when ammonia is the substrate. The allosteric effector GTP functions by stabilizing the protein conformation that binds the tetrahedral intermediate(s) formed during glutamine hydrolysis. Inhibited by the product CTP, via allosteric rather than competitive inhibition. In terms of biological role, catalyzes the ATP-dependent amination of UTP to CTP with either L-glutamine or ammonia as the source of nitrogen. Regulates intracellular CTP levels through interactions with the four ribonucleotide triphosphates. This Brucella melitensis biotype 2 (strain ATCC 23457) protein is CTP synthase.